The following is a 210-amino-acid chain: Probable GTP-binding protein EngB (210 aa).

The 175-residue stretch at 25–199 (TGIEVAFAGR…RQKLDTWFSE (175 aa)) folds into the EngB-type G domain. GTP-binding positions include 33–40 (GRSNAGKS), 60–64 (GRTQL), 78–81 (DLPG), 145–148 (TKAD), and 178–180 (FSS). The Mg(2+) site is built by Ser40 and Thr62.

Belongs to the TRAFAC class TrmE-Era-EngA-EngB-Septin-like GTPase superfamily. EngB GTPase family. The cofactor is Mg(2+).

Functionally, necessary for normal cell division and for the maintenance of normal septation. In Shigella flexneri, this protein is Probable GTP-binding protein EngB.